The sequence spans 430 residues: L-cysteine:1D-myo-inositol 2-amino-2-deoxy-alpha-D-glucopyranoside ligase (430 aa).

A Zn(2+)-binding site is contributed by cysteine 48. L-cysteinyl-5'-AMP contacts are provided by residues 48 to 51 (CGIT), threonine 63, and 86 to 88 (NIT). Residues 50–60 (ITPYDSTHLGH) carry the 'HIGH' region motif. A 'ERGGDP' region motif is present at residues 192 to 197 (ERGGDP). Residue tryptophan 232 coordinates L-cysteinyl-5'-AMP. Residue cysteine 236 coordinates Zn(2+). 254 to 256 (GSD) serves as a coordination point for L-cysteinyl-5'-AMP. Zn(2+) is bound at residue histidine 261. Isoleucine 288 is an L-cysteinyl-5'-AMP binding site. The 'KMSKS' region motif lies at 294 to 298 (KMSKS).

This sequence belongs to the class-I aminoacyl-tRNA synthetase family. MshC subfamily. In terms of assembly, monomer. Zn(2+) serves as cofactor.

The enzyme catalyses 1D-myo-inositol 2-amino-2-deoxy-alpha-D-glucopyranoside + L-cysteine + ATP = 1D-myo-inositol 2-(L-cysteinylamino)-2-deoxy-alpha-D-glucopyranoside + AMP + diphosphate + H(+). Functionally, catalyzes the ATP-dependent condensation of GlcN-Ins and L-cysteine to form L-Cys-GlcN-Ins. This Corynebacterium efficiens (strain DSM 44549 / YS-314 / AJ 12310 / JCM 11189 / NBRC 100395) protein is L-cysteine:1D-myo-inositol 2-amino-2-deoxy-alpha-D-glucopyranoside ligase (mshC).